The primary structure comprises 929 residues: Protein translocase subunit SecA (929 aa).

Residues Gln-87, 105–109 (GEGKT), and Asp-512 contribute to the ATP site. Cys-914, Cys-916, Cys-925, and His-926 together coordinate Zn(2+).

This sequence belongs to the SecA family. In terms of assembly, monomer and homodimer. Part of the essential Sec protein translocation apparatus which comprises SecA, SecYEG and auxiliary proteins SecDF-YajC and YidC. It depends on Zn(2+) as a cofactor.

The protein resides in the cell inner membrane. It localises to the cytoplasm. It carries out the reaction ATP + H2O + cellular proteinSide 1 = ADP + phosphate + cellular proteinSide 2.. Part of the Sec protein translocase complex. Interacts with the SecYEG preprotein conducting channel. Has a central role in coupling the hydrolysis of ATP to the transfer of proteins into and across the cell membrane, serving both as a receptor for the preprotein-SecB complex and as an ATP-driven molecular motor driving the stepwise translocation of polypeptide chains across the membrane. In Psychrobacter arcticus (strain DSM 17307 / VKM B-2377 / 273-4), this protein is Protein translocase subunit SecA.